We begin with the raw amino-acid sequence, 220 residues long: Deoxyribose-phosphate aldolase (220 aa).

The active-site Proton donor/acceptor is Asp89. Lys151 acts as the Schiff-base intermediate with acetaldehyde in catalysis. Catalysis depends on Lys180, which acts as the Proton donor/acceptor.

This sequence belongs to the DeoC/FbaB aldolase family. DeoC type 1 subfamily.

The protein localises to the cytoplasm. It carries out the reaction 2-deoxy-D-ribose 5-phosphate = D-glyceraldehyde 3-phosphate + acetaldehyde. Its pathway is carbohydrate degradation; 2-deoxy-D-ribose 1-phosphate degradation; D-glyceraldehyde 3-phosphate and acetaldehyde from 2-deoxy-alpha-D-ribose 1-phosphate: step 2/2. Functionally, catalyzes a reversible aldol reaction between acetaldehyde and D-glyceraldehyde 3-phosphate to generate 2-deoxy-D-ribose 5-phosphate. The polypeptide is Deoxyribose-phosphate aldolase (Streptococcus pneumoniae (strain Hungary19A-6)).